The chain runs to 327 residues: E3 ubiquitin ligase Rnf121 (327 aa).

5 helical membrane passes run 50–70, 79–96, 99–119, 148–168, and 173–193; these read MHAE…LLLV, SYNM…VYFT, LHWW…AYIT, ATGI…NLLF, and EDAM…GVLG. The RING-type; atypical zinc-finger motif lies at 226 to 276; the sequence is CAVCGQQIFVDVNEEGIIENTYRLSCNHVFHEFCIRGWCIVGKKQTCPYCK.

It belongs to the RNF121 family.

Its subcellular location is the endoplasmic reticulum membrane. The catalysed reaction is S-ubiquitinyl-[E2 ubiquitin-conjugating enzyme]-L-cysteine + [acceptor protein]-L-lysine = [E2 ubiquitin-conjugating enzyme]-L-cysteine + N(6)-ubiquitinyl-[acceptor protein]-L-lysine.. The protein operates within protein modification; protein ubiquitination. In terms of biological role, E3 ubiquitin ligase which accepts ubiquitin and transfers it to substrates thereby promoting their degradation by the endoplasmic reticulum-associated degradation (ERAD) pathway which is a pathway involved in ubiquitin-dependent degradation of misfolded endoplasmic reticulum proteins. May regulate the unfolded protein response to reduce endoplasmic reticulum stress. This Xenopus laevis (African clawed frog) protein is E3 ubiquitin ligase Rnf121 (rnf121).